Consider the following 407-residue polypeptide: Obg-like ATPase homolog (407 aa).

The 256-residue stretch at 46–301 (LKIGIVGMPN…LTPEEAAQEC (256 aa)) folds into the OBG-type G domain. ATP contacts are provided by residues 55–60 (NIGKST) and methionine 249. One can recognise a TGS domain in the interval 322–405 (NLIHYFTASE…EPGDIIFWKI (84 aa)).

The protein belongs to the TRAFAC class OBG-HflX-like GTPase superfamily. OBG GTPase family.

Hydrolyzes ATP, and can also hydrolyze GTP with lower efficiency. Has lower affinity for GTP. This is Obg-like ATPase homolog from Schizosaccharomyces pombe (strain 972 / ATCC 24843) (Fission yeast).